The primary structure comprises 256 residues: MLRIADKTFESHLFTGTGKFAAPKVMVEAIRASGSQLVTLAMKRVDLRQRNDAILAPLLAAGVSLLPNTSGAKTAEEAVFAARLAREALGTHWLKLEIHPDARWLLPDPIETLKAAELLVREGFVVLPYCGADPVLCKRLEEVGCAAVMPLGAPIGSNQGLETKAMLEIIIEQATVPVVVDAGIGVPSHAAQALEMGADAVLVNTAIAVADDPVAMARAFRMAIDAGLLARQAGPGARSTQAQATSPLTGFLEALA.

Lys-95 functions as the Schiff-base intermediate with DXP in the catalytic mechanism. Residues Gly-156, 182 to 183, and 204 to 205 contribute to the 1-deoxy-D-xylulose 5-phosphate site; these read AG and NT.

This sequence belongs to the ThiG family. In terms of assembly, homotetramer. Forms heterodimers with either ThiH or ThiS.

The protein localises to the cytoplasm. It carries out the reaction [ThiS sulfur-carrier protein]-C-terminal-Gly-aminoethanethioate + 2-iminoacetate + 1-deoxy-D-xylulose 5-phosphate = [ThiS sulfur-carrier protein]-C-terminal Gly-Gly + 2-[(2R,5Z)-2-carboxy-4-methylthiazol-5(2H)-ylidene]ethyl phosphate + 2 H2O + H(+). The protein operates within cofactor biosynthesis; thiamine diphosphate biosynthesis. Catalyzes the rearrangement of 1-deoxy-D-xylulose 5-phosphate (DXP) to produce the thiazole phosphate moiety of thiamine. Sulfur is provided by the thiocarboxylate moiety of the carrier protein ThiS. In vitro, sulfur can be provided by H(2)S. This chain is Thiazole synthase, found in Klebsiella pneumoniae subsp. pneumoniae (strain ATCC 700721 / MGH 78578).